The primary structure comprises 874 residues: Alanine--tRNA ligase (874 aa).

Positions 563, 567, 665, and 669 each coordinate Zn(2+).

Belongs to the class-II aminoacyl-tRNA synthetase family. Requires Zn(2+) as cofactor.

Its subcellular location is the cytoplasm. The catalysed reaction is tRNA(Ala) + L-alanine + ATP = L-alanyl-tRNA(Ala) + AMP + diphosphate. Catalyzes the attachment of alanine to tRNA(Ala) in a two-step reaction: alanine is first activated by ATP to form Ala-AMP and then transferred to the acceptor end of tRNA(Ala). Also edits incorrectly charged Ser-tRNA(Ala) and Gly-tRNA(Ala) via its editing domain. This Actinobacillus pleuropneumoniae serotype 7 (strain AP76) protein is Alanine--tRNA ligase.